A 141-amino-acid polypeptide reads, in one-letter code: Cytochrome c-type biogenesis protein CcmE (141 aa).

Topologically, residues 1-7 are cytoplasmic; it reads MQRKHKR. The helical; Signal-anchor for type II membrane protein transmembrane segment at 8–28 threads the bilayer; that stretch reads ILFVAVSFIALGCVSAFVLFE. Residues 29 to 141 are Periplasmic-facing; the sequence is LSKSISFFCT…SSDAAVIGSS (113 aa). Positions 121 and 125 each coordinate heme.

It belongs to the CcmE/CycJ family.

It localises to the cell inner membrane. Its function is as follows. Heme chaperone required for the biogenesis of c-type cytochromes. Transiently binds heme delivered by CcmC and transfers the heme to apo-cytochromes in a process facilitated by CcmF and CcmH. This Anaplasma phagocytophilum (strain HZ) protein is Cytochrome c-type biogenesis protein CcmE.